The following is a 186-amino-acid chain: uncharacterized protein (186 aa).

This is an uncharacterized protein from Caenorhabditis elegans.